We begin with the raw amino-acid sequence, 916 residues long: Neurofilament medium polypeptide (916 aa).

Polar residues predominate over residues 1-10 (MSYTLDSLGN). The interval 1-51 (MSYTLDSLGNPSAYRRVTETRSSFSRVSGSPSSGFRSQSWSRGSPSTVSSS) is disordered. An N-acetylserine modification is found at Ser2. Residues 2–104 (SYTLDSLGNP…KLSRSNEKEQ (103 aa)) are head. The span at 21-44 (RSSFSRVSGSPSSGFRSQSWSRGS) shows a compositional bias: low complexity. Residue Ser30 is modified to Phosphoserine. An Omega-N-methylarginine modification is found at Arg42. An O-linked (GlcNAc) threonine glycan is attached at Thr47. A Phosphoserine modification is found at Ser99. The 312-residue stretch at 101–412 (EKEQLQGLND…KLLEGEETRF (312 aa)) folds into the IF rod domain. Residues 105-136 (LQGLNDRFAGYIEKVHYLEQQNKEIEAEIQAL) are coil 1A. The linker 1 stretch occupies residues 137 to 149 (RQKQASHAQLGDA). Residues 150 to 248 (YDQEIRELRA…EEEVADLLAQ (99 aa)) form a coil 1B region. Phosphoserine is present on Ser226. The interval 249-265 (IQASHITVERKDYLKTD) is linker 12. The segment at 266-287 (ISTALKEIRSQLESHSDQNMHQ) is coil 2A. Residues 288–291 (AEEW) are linker 2. The coil 2B stretch occupies residues 292–412 (FKCRYAKLTE…KLLEGEETRF (121 aa)). At Tyr320 the chain carries Phosphotyrosine. A phosphoserine mark is found at Ser346 and Ser418. Residues 413–916 (STFAGSITGP…AIVKEVTQSD (504 aa)) form a tail region. Thr431 is a glycosylation site (O-linked (GlcNAc) threonine). Phosphoserine occurs at positions 467 and 483. The disordered stretch occupies residues 485–851 (KEEKKEAAEE…KKGGDKSEEK (367 aa)). A compositionally biased stretch (acidic residues) spans 493 to 505 (EEKEEEPEAEEEE). A Phosphoserine modification is found at Ser511. Acidic residues predominate over residues 521–541 (KEEEGEKEEEEGQEEEEEEDE). Residues 542–561 (GAKSDQAEEGGSEKEGSSEK) show a composition bias toward basic and acidic residues. Residues Ser545, Ser553, Ser558, and Ser559 each carry the phosphoserine modification. Positions 562-582 (EEGEQEEGETEAEAEGEEAEA) are enriched in acidic residues. A Phosphothreonine modification is found at Thr571. A compositionally biased stretch (basic and acidic residues) spans 583–614 (KEEKKVEEKSEEVATKEELVADAKVEKPEKAK). Repeat copies occupy residues 614 to 626 (KSPV…EEKG), 627 to 639 (KSPV…EEKG), 640 to 652 (KSPV…EEKG), 653 to 665 (KSPV…EEKG), 666 to 678 (KSPV…EEKA), and 679 to 691 (KSPV…EEAK). A 6 X 13 AA approximate tandem repeats of K-S-P-V-[PS]-K-S-P-V-E-E-[KA]-[GAK] region spans residues 614–691 (KSPVPKSPVE…VPKSPVEEAK (78 aa)). Ser641 and Ser646 each carry phosphoserine. Ser680 and Ser685 each carry phosphoserine. Composition is skewed to basic and acidic residues over residues 686–701 (PVEE…KGEQ), 707–742 (KEVK…KEEA), and 755–778 (VHLE…EKAG). A Phosphoserine modification is found at Ser736. Phosphoserine occurs at positions 783, 821, and 837. The span at 788–828 (SDKGAKGSRKEDIAVNGEVEGKEEVEQETKEKGSGREEEKG) shows a compositional bias: basic and acidic residues. A compositionally biased stretch (basic and acidic residues) spans 839-851 (ADEKKGGDKSEEK).

This sequence belongs to the intermediate filament family. Forms heterodimers with NEFL; which can further hetero-oligomerize (in vitro). Forms heterodimers with INA (in vitro). Post-translationally, there are a number of repeats of the tripeptide K-S-P, NFM is phosphorylated on a number of the serines in this motif. It is thought that phosphorylation of NFM results in the formation of interfilament cross bridges that are important in the maintenance of axonal caliber. Phosphorylation seems to play a major role in the functioning of the larger neurofilament polypeptides (NF-M and NF-H), the levels of phosphorylation being altered developmentally and coincidentally with a change in the neurofilament function. In terms of processing, phosphorylated in the head and rod regions by the PKC kinase PKN1, leading to the inhibition of polymerization.

The protein localises to the cytoplasm. It is found in the cytoskeleton. The protein resides in the cell projection. Its subcellular location is the axon. In terms of biological role, neurofilaments usually contain three intermediate filament proteins: NEFL, NEFM, and NEFH which are involved in the maintenance of neuronal caliber. May additionally cooperate with the neuronal intermediate filament proteins PRPH and INA to form neuronal filamentous networks. This chain is Neurofilament medium polypeptide (NEFM), found in Homo sapiens (Human).